Reading from the N-terminus, the 181-residue chain is MKTLILFSTRDGQTREIASYLASELKELGIQADVANVHRIEEPQWENYDRVVIGASIRYGHYHSAFQEFVKKHATRLNSMPSAFYSVNLVARKPEKRTPQTNSYARKFLMNSQWRPDRCAVIAGALRYPRYRWYDRFMIKLIMKMSGGETDTRKEVVYTDWEQVANFAREIAHLTDKPTLK.

The 170-residue stretch at 3 to 172 (TLILFSTRDG…QVANFAREIA (170 aa)) folds into the Flavodoxin-like domain. FMN is bound by residues 9–13 (TRDGQ) and 84–152 (FYSV…ETDT).

The protein belongs to the HemG family. Requires FMN as cofactor.

It is found in the cell inner membrane. The catalysed reaction is protoporphyrinogen IX + 3 a menaquinone = protoporphyrin IX + 3 a menaquinol. It carries out the reaction protoporphyrinogen IX + 3 a ubiquinone = protoporphyrin IX + 3 a ubiquinol. It catalyses the reaction protoporphyrinogen IX + 3 a quinone = protoporphyrin IX + 3 a quinol. It functions in the pathway porphyrin-containing compound metabolism; protoporphyrin-IX biosynthesis; protoporphyrin-IX from protoporphyrinogen-IX: step 1/1. In terms of biological role, catalyzes the 6-electron oxidation of protoporphyrinogen IX to form protoporphyrin IX; under anaerobic conditions uses menaquinone as an electron acceptor, under aerobic condition uses ubiquinone as an electron acceptor. This Escherichia coli O157:H7 protein is Protoporphyrinogen IX dehydrogenase [quinone].